The sequence spans 143 residues: Myosin 1 light chain cam2 (143 aa).

EF-hand domains lie at 6-41, 75-110, and 111-143; these read EQTDEMKEAFVLYDIDKDGLIPTSHVGSVLRSLGIN, ESEEEYIKAFRVFDKDNSGYIETAKFADYMKTLGEK, and LSDNEVQLMVQEADPTNSGSFDYYDFVQRIMAK.

The protein belongs to the calmodulin family. In terms of assembly, interacts with myo1 and pik1.

The protein localises to the cytoplasm. It is found in the prospore membrane. Functionally, plays a role in meiosis and sporulation. The polypeptide is Myosin 1 light chain cam2 (Schizosaccharomyces pombe (strain 972 / ATCC 24843) (Fission yeast)).